The sequence spans 158 residues: NADH-quinone oxidoreductase subunit B (158 aa).

4 residues coordinate [4Fe-4S] cluster: Cys-37, Cys-38, Cys-102, and Cys-132.

The protein belongs to the complex I 20 kDa subunit family. In terms of assembly, NDH-1 is composed of 14 different subunits. Subunits NuoB, C, D, E, F, and G constitute the peripheral sector of the complex. Requires [4Fe-4S] cluster as cofactor.

The protein resides in the cell inner membrane. The enzyme catalyses a quinone + NADH + 5 H(+)(in) = a quinol + NAD(+) + 4 H(+)(out). Its function is as follows. NDH-1 shuttles electrons from NADH, via FMN and iron-sulfur (Fe-S) centers, to quinones in the respiratory chain. Couples the redox reaction to proton translocation (for every two electrons transferred, four hydrogen ions are translocated across the cytoplasmic membrane), and thus conserves the redox energy in a proton gradient. The chain is NADH-quinone oxidoreductase subunit B from Bordetella avium (strain 197N).